We begin with the raw amino-acid sequence, 683 residues long: Leucine-rich repeat and calponin homology domain-containing protein 4 (683 aa).

Residues 1–18 (MAAAVAAPLAAGGEEAAA) show a composition bias toward low complexity. Residues 1–34 (MAAAVAAPLAAGGEEAAATTSVPGSPGLPGRRSA) are disordered. LRR repeat units lie at residues 41 to 64 (AVAT…AARS), 67 to 90 (LSDI…ACQL), 92 to 113 (SLEG…LGNL), 114 to 136 (TALT…ICQL), 138 to 158 (LRVL…IGTL), 159 to 181 (GSLR…LCGL), 182 to 204 (SSLR…LGDL), 206 to 226 (LVRL…FCRL), and 227 to 250 (RHLQ…CLKG). The tract at residues 268–292 (ALGDLAPSRPPSFSPCPAEDLFPGH) is disordered. Ser-279, Ser-281, Ser-304, Ser-307, Ser-309, and Ser-313 each carry phosphoserine. Disordered stretches follow at residues 326 to 436 (FRIS…LLKP) and 449 to 539 (STQA…DEKD). Composition is skewed to basic and acidic residues over residues 330-345 (ELAR…KEDG), 357-376 (IDSH…EQRP), and 384-418 (GDRE…ERRQ). Residues Ser-432 and Ser-457 each carry the phosphoserine modification. Polar residues predominate over residues 449-460 (STQAMHNGSPKS). Low complexity-rich tracts occupy residues 461–481 (SASQ…PASQ) and 511–524 (SSSQ…SPDS). Residues Ser-511, Ser-513, Ser-517, Ser-521, and Ser-589 each carry the phosphoserine modification. In terms of domain architecture, Calponin-homology (CH) spans 534 to 647 (VPDEKDLMTQ…ALEAVKRVGG (114 aa)). A helical transmembrane segment spans residues 653–673 (LWPPSGLGGFVVFYVVLMLLL).

The protein localises to the cell membrane. Accessory protein that regulates signaling by multiple TLRs, acting as a broad-spanning regulator of the innate immune response. In macrophages, binds LPS and promotes proper docking of LPS in lipid raft membrane. May be required for lipid raft maintenance. This chain is Leucine-rich repeat and calponin homology domain-containing protein 4, found in Homo sapiens (Human).